Reading from the N-terminus, the 263-residue chain is 4-hydroxy-tetrahydrodipicolinate reductase (263 aa).

NAD(+)-binding positions include 7–12, 96–98, and 122–125; these read GFKGRM, GTT, and APNF. Residue His152 is the Proton donor/acceptor of the active site. His153 lines the (S)-2,3,4,5-tetrahydrodipicolinate pocket. The active-site Proton donor is the Lys156. (S)-2,3,4,5-tetrahydrodipicolinate is bound at residue 162-163; it reads GT.

Belongs to the DapB family.

It localises to the cytoplasm. The enzyme catalyses (S)-2,3,4,5-tetrahydrodipicolinate + NAD(+) + H2O = (2S,4S)-4-hydroxy-2,3,4,5-tetrahydrodipicolinate + NADH + H(+). It catalyses the reaction (S)-2,3,4,5-tetrahydrodipicolinate + NADP(+) + H2O = (2S,4S)-4-hydroxy-2,3,4,5-tetrahydrodipicolinate + NADPH + H(+). It functions in the pathway amino-acid biosynthesis; L-lysine biosynthesis via DAP pathway; (S)-tetrahydrodipicolinate from L-aspartate: step 4/4. Its function is as follows. Catalyzes the conversion of 4-hydroxy-tetrahydrodipicolinate (HTPA) to tetrahydrodipicolinate. This chain is 4-hydroxy-tetrahydrodipicolinate reductase, found in Listeria innocua serovar 6a (strain ATCC BAA-680 / CLIP 11262).